Reading from the N-terminus, the 313-residue chain is Ribosomal RNA small subunit methyltransferase H (313 aa).

S-adenosyl-L-methionine is bound by residues G31–H33, D51, F77, D95, and Q102.

The protein belongs to the methyltransferase superfamily. RsmH family.

The protein resides in the cytoplasm. The enzyme catalyses cytidine(1402) in 16S rRNA + S-adenosyl-L-methionine = N(4)-methylcytidine(1402) in 16S rRNA + S-adenosyl-L-homocysteine + H(+). Specifically methylates the N4 position of cytidine in position 1402 (C1402) of 16S rRNA. The polypeptide is Ribosomal RNA small subunit methyltransferase H (Xylella fastidiosa (strain M12)).